The sequence spans 474 residues: Protein IFIT1 homolog B (474 aa).

10 TPR repeats span residues 52–85 (VGIHNLLAYVKHLKGQNEEALVSLKKAEDLIQKE), 95–128 (LVTWGNFAWVYYHMGRLAEAQTYLDKVENTCKKF), 141–174 (VDCEEGWALAKCGGKNYERAKTCFEKALEGNPEN), 182–216 (AITVYRLDKFNTASGRNKAFSLHVLKRAVRLNPDD), 218–250 (YIRVLLALKLQDEGQEAEGEKYIEEALTSISSQ), 251–284 (AYVFQYAAKFYRRKGSVDKALELLKMALETTPTS), 305–339 (ATNWQPRGQDRETVDRLVQLAICKFEKTIMLKRTF), 340–373 (EMAYVDLAETYAEIGHHRKAEEHFQKGLRMKIFE), 378–412 (QEIHYHYGRFQEHHGKSQDKAITHYLKGLKIEKMS), and 437–470 (VESVSLLGLIHKLKGEVSDALLCYERALRLAADL).

This sequence belongs to the IFIT family.

In terms of biological role, IFIT1B is likely non-functional, lacking the critical antiviral role of IFIT1. Unlike IFIT1, which is essential in the innate immune response as part of an interferon-dependent multiprotein complex, IFIT1B does not prevent the translation of viral RNAs that lack host-specific 2'-O-methylation at their 5' cap. Consequently, it probably cannot inhibit their translation by competing with the host translation machinery. This Homo sapiens (Human) protein is Protein IFIT1 homolog B.